The following is a 293-amino-acid chain: Protease HtpX (293 aa).

The next 2 membrane-spanning stretches (helical) occupy residues 4 to 24 (IALF…VLSL) and 34 to 54 (GLLI…LLMS). Histidine 139 is a binding site for Zn(2+). Glutamate 140 is a catalytic residue. Residue histidine 143 participates in Zn(2+) binding. 2 helical membrane-spanning segments follow: residues 158 to 178 (VVNT…AGFM) and 193 to 213 (LIYF…ASII). Glutamate 222 serves as a coordination point for Zn(2+).

This sequence belongs to the peptidase M48B family. The cofactor is Zn(2+).

It is found in the cell inner membrane. The protein is Protease HtpX of Enterobacter sp. (strain 638).